The chain runs to 203 residues: Outer-membrane lipoprotein carrier protein (203 aa).

The N-terminal stretch at methionine 1–alanine 21 is a signal peptide.

The protein belongs to the LolA family. As to quaternary structure, monomer.

Its subcellular location is the periplasm. In terms of biological role, participates in the translocation of lipoproteins from the inner membrane to the outer membrane. Only forms a complex with a lipoprotein if the residue after the N-terminal Cys is not an aspartate (The Asp acts as a targeting signal to indicate that the lipoprotein should stay in the inner membrane). This is Outer-membrane lipoprotein carrier protein from Yersinia enterocolitica serotype O:8 / biotype 1B (strain NCTC 13174 / 8081).